A 1063-amino-acid chain; its full sequence is E3 ubiquitin-protein ligase PDZRN3 (1063 aa).

The RING-type; degenerate zinc finger occupies 18 to 56 (CALCHKVLEDPLTTPCGHVFCAGCVLPWVVQEGSCPARC). Residues 100 to 158 (EHLERCDFAPARCRHAGCGQLLLRRDVEAHMRDACDARPVGRCQEGCGLPLTHGEQRAG) form a TRAF-type zinc finger. PDZ domains follow at residues 249 to 339 (TLVL…LRRT) and 419 to 503 (EVGL…IARP). Position 427 is a phosphoserine (S427). Positions 545 to 602 (QKKHEEDGGTTDTATILSNQHEKDSGVGRTDESTRNDESSEQENNGEDATASANPLAG) are disordered. Residues 554 to 563 (TTDTATILSN) are compositionally biased toward polar residues. The span at 564–582 (QHEKDSGVGRTDESTRNDE) shows a compositional bias: basic and acidic residues. Residues 680–705 (ESVDKELELLNEELRSIELECLSIVR) are a coiled coil. The segment covering 746–755 (ELPEKSDKDS) has biased composition (basic and acidic residues). Disordered regions lie at residues 746-798 (ELPE…IEAY) and 834-853 (IKERRGSDGSRSPTASPKLG). Residues 756-770 (SSAYNTGESCRSTPL) show a composition bias toward polar residues.

Interacts with NLGN1 and EFNB2. Interacts with UBE2D2 and with MUSK via the first PDZ domain. In myotubes, the interaction between PDZRN3 and MUSK is enhanced upon agrin stimulation. Auto-ubiquitinated. As to expression, highly expressed in skeletal and cardiac muscle and at lower levels in spinal cord and brain (at protein level). Also expressed in kidney and lung. In muscles, concentrated at the neuromuscular junction (NMJ).

The protein localises to the synapse. It is found in the cytoplasm. It carries out the reaction S-ubiquitinyl-[E2 ubiquitin-conjugating enzyme]-L-cysteine + [acceptor protein]-L-lysine = [E2 ubiquitin-conjugating enzyme]-L-cysteine + N(6)-ubiquitinyl-[acceptor protein]-L-lysine.. Its pathway is protein modification; protein ubiquitination. Functionally, E3 ubiquitin-protein ligase. Plays an important role in regulating the surface level of MUSK on myotubes. Mediates the ubiquitination of MUSK, promoting its endocytosis and lysosomal degradation. Might contribute to terminal myogenic differentiation. The chain is E3 ubiquitin-protein ligase PDZRN3 (Pdzrn3) from Mus musculus (Mouse).